Consider the following 425-residue polypeptide: Glutamyl-tRNA reductase (425 aa).

Residues 47–50, S107, 112–114, and Q118 each bind substrate; these read TCNR and EDQ. The active-site Nucleophile is C48. 187-192 provides a ligand contact to NADP(+); sequence GAGHIA.

The protein belongs to the glutamyl-tRNA reductase family. In terms of assembly, homodimer.

It carries out the reaction (S)-4-amino-5-oxopentanoate + tRNA(Glu) + NADP(+) = L-glutamyl-tRNA(Glu) + NADPH + H(+). Its pathway is porphyrin-containing compound metabolism; protoporphyrin-IX biosynthesis; 5-aminolevulinate from L-glutamyl-tRNA(Glu): step 1/2. The protein operates within porphyrin-containing compound metabolism; chlorophyll biosynthesis. In terms of biological role, catalyzes the NADPH-dependent reduction of glutamyl-tRNA(Glu) to glutamate 1-semialdehyde (GSA). This chain is Glutamyl-tRNA reductase, found in Roseiflexus sp. (strain RS-1).